Reading from the N-terminus, the 144-residue chain is UPF0306 protein Spro_0510 (144 aa).

Belongs to the UPF0306 family.

This chain is UPF0306 protein Spro_0510, found in Serratia proteamaculans (strain 568).